The primary structure comprises 31 residues: Cyclotide vinc-B (31 aa).

The cyclopeptide (Gly-Asn) cross-link spans 1-31 (GSIPACGESCFKGKCYTPGCTCSKYPLCAKN). Cystine bridges form between cysteine 6–cysteine 20, cysteine 10–cysteine 22, and cysteine 15–cysteine 28.

Belongs to the cyclotide family. This is a cyclic peptide.

In terms of biological role, probably participates in a plant defense mechanism. This chain is Cyclotide vinc-B, found in Viola inconspicua.